A 298-amino-acid chain; its full sequence is Protease HtpX homolog (298 aa).

2 consecutive transmembrane segments (helical) span residues 16–36 and 38–58; these read VMFG…YLFW and SWVS…LIMI. His144 provides a ligand contact to Zn(2+). Residue Glu145 is part of the active site. Zn(2+) is bound at residue His148. The next 2 membrane-spanning stretches (helical) occupy residues 159–179 and 197–217; these read IALA…NWFW and IIGL…ASIA. Residue Glu226 participates in Zn(2+) binding.

This sequence belongs to the peptidase M48B family. Requires Zn(2+) as cofactor.

The protein resides in the cell membrane. This is Protease HtpX homolog from Levilactobacillus brevis (strain ATCC 367 / BCRC 12310 / CIP 105137 / JCM 1170 / LMG 11437 / NCIMB 947 / NCTC 947) (Lactobacillus brevis).